The following is a 251-amino-acid chain: Hydroxyacylglutathione hydrolase (251 aa).

The Zn(2+) site is built by His-59, His-61, Asp-63, His-64, His-118, Asp-141, and His-179.

Belongs to the metallo-beta-lactamase superfamily. Glyoxalase II family. As to quaternary structure, monomer. Requires Zn(2+) as cofactor.

The catalysed reaction is an S-(2-hydroxyacyl)glutathione + H2O = a 2-hydroxy carboxylate + glutathione + H(+). Its pathway is secondary metabolite metabolism; methylglyoxal degradation; (R)-lactate from methylglyoxal: step 2/2. Thiolesterase that catalyzes the hydrolysis of S-D-lactoyl-glutathione to form glutathione and D-lactic acid. The polypeptide is Hydroxyacylglutathione hydrolase (Prochlorococcus marinus (strain NATL2A)).